Here is a 926-residue protein sequence, read N- to C-terminus: Tyrosine-protein phosphatase non-receptor type 4 (926 aa).

The FERM domain occupies 29 to 312 (VVCNILLLDN…EHHTFFRLDR (284 aa)). Disordered regions lie at residues 380 to 412 (DDRL…TRLR) and 430 to 475 (EVFV…KNSW). Polar residues-rich tracts occupy residues 398-408 (NHRNSTFTQEG) and 430-456 (EVFV…SQET). Ser-474 carries the phosphoserine modification. One can recognise a PDZ domain in the interval 517 to 589 (LIRMKPDENG…DQVVLFIKAS (73 aa)). Residues 655 to 911 (VLTQFDQLYR…RFVCEAILKV (257 aa)) enclose the Tyrosine-protein phosphatase domain. Substrate-binding positions include Asp-820, 852-858 (CSAGIGR), and Gln-896. The active-site Phosphocysteine intermediate is Cys-852.

Belongs to the protein-tyrosine phosphatase family. Non-receptor class subfamily. In terms of assembly, interacts with MAPK12 (via C-terminus); this interaction abolishes PTPN4 catalytic autoinhibition and thus activates the phosphatase activity. As to quaternary structure, (Microbial infection) Interacts with attenuated rabies virus protein G; this interaction is required for virally-induced apoptosis. Post-translationally, highly phosphorylated on serine and threonine residues but not on tyrosines. In terms of processing, cleaved and activated by calpain I/CAPN1.

It is found in the cell membrane. The protein resides in the cytoplasm. The protein localises to the cytoskeleton. The catalysed reaction is O-phospho-L-tyrosyl-[protein] + H2O = L-tyrosyl-[protein] + phosphate. In terms of biological role, phosphatase that plays a role in immunity, learning, synaptic plasticity or cell homeostasis. Regulates neuronal cell homeostasis by protecting neurons against apoptosis. Negatively regulates TLR4-induced interferon beta production by dephosphorylating adapter TICAM2 and inhibiting subsequent TRAM-TRIF interaction. Also dephosphorylates the immunoreceptor tyrosine-based activation motifs/ITAMs of the TCR zeta subunit and thereby negatively regulates TCR-mediated signaling pathway. May act at junctions between the membrane and the cytoskeleton. This is Tyrosine-protein phosphatase non-receptor type 4 (PTPN4) from Homo sapiens (Human).